The chain runs to 171 residues: Protein TIFY 11d (171 aa).

Residues 65–100 form the Tify domain; sequence PSAGTAPLTIFYDGRMVVVDDVPAEKAAELMRLAGS. The Jas motif lies at 117-142; it reads PIARKASLQRFLQKRKHRITTTSEPY. The Nuclear localization signal motif lies at 119–126; that stretch reads ARKASLQR.

Belongs to the TIFY/JAZ family. As to quaternary structure, interacts with BHLH148 and COI1A. Interacts with COI1A, COI1B and COI2 in a coronatine-dependent manner. Coronatine is an analog of jasmonoyl isoleucine (JA-Ile). Post-translationally, ubiquitinated. Increase in jasmonoyl isoleucine (JA-Ile) levels mediates its degradation via COI1A-mediated proteasome pathway.

Its subcellular location is the nucleus. In terms of biological role, repressor of jasmonate (JA) responses. May act on an initial response of JA-regulated gene expression toward drought tolerance as part of a BHLH148-TIFY11D/JAZ12-COI1A complex. The polypeptide is Protein TIFY 11d (Oryza sativa subsp. indica (Rice)).